Consider the following 183-residue polypeptide: ATP synthase subunit delta (183 aa).

It belongs to the ATPase delta chain family. In terms of assembly, F-type ATPases have 2 components, F(1) - the catalytic core - and F(0) - the membrane proton channel. F(1) has five subunits: alpha(3), beta(3), gamma(1), delta(1), epsilon(1). CF(0) has four main subunits: a(1), b(1), b'(1) and c(10-14). The alpha and beta chains form an alternating ring which encloses part of the gamma chain. F(1) is attached to F(0) by a central stalk formed by the gamma and epsilon chains, while a peripheral stalk is formed by the delta, b and b' chains.

It localises to the cellular thylakoid membrane. Its function is as follows. F(1)F(0) ATP synthase produces ATP from ADP in the presence of a proton or sodium gradient. F-type ATPases consist of two structural domains, F(1) containing the extramembraneous catalytic core and F(0) containing the membrane proton channel, linked together by a central stalk and a peripheral stalk. During catalysis, ATP synthesis in the catalytic domain of F(1) is coupled via a rotary mechanism of the central stalk subunits to proton translocation. This protein is part of the stalk that links CF(0) to CF(1). It either transmits conformational changes from CF(0) to CF(1) or is implicated in proton conduction. In Trichormus variabilis (strain ATCC 29413 / PCC 7937) (Anabaena variabilis), this protein is ATP synthase subunit delta.